The chain runs to 478 residues: MVQGKVLVVSNRIPVTIKRLDNGSYDYSMSSGGLVTALQGLKKTTEFQWYGWPGLEIPEDEQTKVNDELKSKFNCTAIFLSDTIADLHYNGFSNSILWPLFHYHPGEMNFDENAWAAYIEANKKFALEIVKQVNDDDMIWVHDYHLMLLPEMLRQEIGNKKKNIKIGFFLHTPFPSSEIYRILPVRKEILEGVLSCDLIGFHTYDYARHFISSVSRIVPNVSTLPNGIKYQGRSISIGAFPIGIDVDNFIDGLKKDSVVERIKQLKSKFKDVKVIVGVDRLDYIKGVPQKLHAFEVFLNENPEWIGKVVLVQVAVPSRGDVEEYQSLRSTVSELVGRINGEFGTVEFVPIHYLHKSIPFDELISLYNISDVCLVSSTRDGMNLVSYEYIACQQDRKGVLILSEFAGAAQSLNGALIVNPWNTEDLSEAIKESLTLPEEKREFNFKKLFTYISKYTSGFWGESFVKELYKCNPQKSLRD.

D-glucose 6-phosphate contacts are provided by Tyr-89 and Asp-143. UDP-binding residues include Arg-280 and Lys-285. The UDP-alpha-D-glucose site is built by Arg-280 and Lys-285. Arg-318 serves as a coordination point for D-glucose 6-phosphate. Residues Ile-357 and 383–387 (LVSYE) each bind UDP. UDP-alpha-D-glucose contacts are provided by residues Ile-357 and 379-387 (DGMNLVSYE).

Belongs to the glycosyltransferase 20 family.

The enzyme catalyses D-glucose 6-phosphate + UDP-alpha-D-glucose = alpha,alpha-trehalose 6-phosphate + UDP + H(+). Its pathway is carbohydrate biosynthesis. Inhibited by validoxylamine A, a non-reactive trehalose analog. Synthase catalytic subunit of the trehalose synthase complex that catalyzes the production of trehalose from glucose-6-phosphate and UDP-alpha-D-glucose in a two step process. The sequence is that of Alpha,alpha-trehalose-phosphate synthase [UDP-forming] from Candida albicans (strain SC5314 / ATCC MYA-2876) (Yeast).